The following is a 138-amino-acid chain: Large ribosomal subunit protein uL16 (138 aa).

Over residues 1–13 (MLQPARRKYRKEQ) the composition is skewed to basic residues. Residues 1 to 22 (MLQPARRKYRKEQKGRNTGIAT) form a disordered region.

It belongs to the universal ribosomal protein uL16 family. Part of the 50S ribosomal subunit.

In terms of biological role, binds 23S rRNA and is also seen to make contacts with the A and possibly P site tRNAs. This is Large ribosomal subunit protein uL16 from Delftia acidovorans (strain DSM 14801 / SPH-1).